A 294-amino-acid polypeptide reads, in one-letter code: 4-hydroxy-tetrahydrodipicolinate synthase (294 aa).

Thr-44 contacts pyruvate. Catalysis depends on Tyr-132, which acts as the Proton donor/acceptor. Lys-161 functions as the Schiff-base intermediate with substrate in the catalytic mechanism. Pyruvate is bound at residue Ile-206.

This sequence belongs to the DapA family. As to quaternary structure, homotetramer; dimer of dimers.

Its subcellular location is the cytoplasm. It carries out the reaction L-aspartate 4-semialdehyde + pyruvate = (2S,4S)-4-hydroxy-2,3,4,5-tetrahydrodipicolinate + H2O + H(+). It functions in the pathway amino-acid biosynthesis; L-lysine biosynthesis via DAP pathway; (S)-tetrahydrodipicolinate from L-aspartate: step 3/4. Its activity is regulated as follows. Is not inhibited by (S)-lysine, in contrast to E.coli DapA. In terms of biological role, catalyzes the condensation of (S)-aspartate-beta-semialdehyde [(S)-ASA] and pyruvate to 4-hydroxy-tetrahydrodipicolinate (HTPA). This is 4-hydroxy-tetrahydrodipicolinate synthase from Thermotoga maritima (strain ATCC 43589 / DSM 3109 / JCM 10099 / NBRC 100826 / MSB8).